Reading from the N-terminus, the 285-residue chain is S-methyl-5'-thioadenosine phosphorylase (285 aa).

Residues serine 10, arginine 52 to histidine 53, and threonine 85 to alanine 86 each bind phosphate. Residue methionine 188 coordinates substrate. Residue threonine 189 coordinates phosphate. Residue aspartate 212–aspartate 214 participates in substrate binding.

It belongs to the PNP/MTAP phosphorylase family. MTAP subfamily. Homotrimer.

It localises to the cytoplasm. Its subcellular location is the nucleus. It carries out the reaction S-methyl-5'-thioadenosine + phosphate = 5-(methylsulfanyl)-alpha-D-ribose 1-phosphate + adenine. Its pathway is amino-acid biosynthesis; L-methionine biosynthesis via salvage pathway; S-methyl-5-thio-alpha-D-ribose 1-phosphate from S-methyl-5'-thioadenosine (phosphorylase route): step 1/1. In terms of biological role, catalyzes the reversible phosphorylation of S-methyl-5'-thioadenosine (MTA) to adenine and 5-methylthioribose-1-phosphate. Involved in the breakdown of MTA, a major by-product of polyamine biosynthesis. Responsible for the first step in the methionine salvage pathway after MTA has been generated from S-adenosylmethionine. Has broad substrate specificity with 6-aminopurine nucleosides as preferred substrates. In Caenorhabditis briggsae, this protein is S-methyl-5'-thioadenosine phosphorylase.